The chain runs to 637 residues: Threonine--tRNA ligase (637 aa).

One can recognise a TGS domain in the interval 1–61 (MLNITLPDCS…VEDSAVQIIT (61 aa)). The segment at 242–533 (DHRKLGKQLD…LIENHAGSFP (292 aa)) is catalytic. Positions 333, 384, and 510 each coordinate Zn(2+).

Belongs to the class-II aminoacyl-tRNA synthetase family. As to quaternary structure, homodimer. Zn(2+) is required as a cofactor.

The protein localises to the cytoplasm. The catalysed reaction is tRNA(Thr) + L-threonine + ATP = L-threonyl-tRNA(Thr) + AMP + diphosphate + H(+). Catalyzes the attachment of threonine to tRNA(Thr) in a two-step reaction: L-threonine is first activated by ATP to form Thr-AMP and then transferred to the acceptor end of tRNA(Thr). Also edits incorrectly charged L-seryl-tRNA(Thr). The protein is Threonine--tRNA ligase of Neisseria gonorrhoeae (strain ATCC 700825 / FA 1090).